The primary structure comprises 691 residues: Dipeptidyl peptidase 3 (691 aa).

Histidine 431 lines the Zn(2+) pocket. The active site involves glutamate 432. Residues histidine 436 and glutamate 492 each contribute to the Zn(2+) site.

Belongs to the peptidase M49 family. The cofactor is Zn(2+).

It is found in the cytoplasm. The catalysed reaction is Release of an N-terminal dipeptide from a peptide comprising four or more residues, with broad specificity. Also acts on dipeptidyl 2-naphthylamides.. The sequence is that of Dipeptidyl peptidase 3 (dpp3-1) from Dictyostelium discoideum (Social amoeba).